The sequence spans 569 residues: Probable diguanylate cyclase DgcQ (569 aa).

2 helical membrane passes run 25-45 and 365-385; these read LGPG…STLL and IALT…WYVI. The 136-residue stretch at 433-568 folds into the GGDEF domain; that stretch reads HPFSVIQVDL…GRNRVCASDN (136 aa). D441 provides a ligand contact to Mg(2+). Residues N449, H454, and D458 each coordinate substrate. Residue E484 coordinates Mg(2+). The Proton acceptor role is filled by E484.

As to quaternary structure, homodimer. The cofactor is Mg(2+).

The protein localises to the cell inner membrane. The enzyme catalyses 2 GTP = 3',3'-c-di-GMP + 2 diphosphate. The protein operates within glycan metabolism; bacterial cellulose biosynthesis. Its pathway is purine metabolism; 3',5'-cyclic di-GMP biosynthesis. Its function is as follows. Catalyzes the synthesis of cyclic-di-GMP (c-di-GMP) via the condensation of 2 GTP molecules. Cyclic-di-GMP is a second messenger which controls cell surface-associated traits in bacteria. Involved in the regulation of cellulose production. This is Probable diguanylate cyclase DgcQ from Shigella sonnei (strain Ss046).